Consider the following 252-residue polypeptide: tRNA (guanine-N(1)-)-methyltransferase (252 aa).

Residues Gly113 and 133–138 (LGDYVL) each bind S-adenosyl-L-methionine.

The protein belongs to the RNA methyltransferase TrmD family. In terms of assembly, homodimer.

The protein resides in the cytoplasm. The catalysed reaction is guanosine(37) in tRNA + S-adenosyl-L-methionine = N(1)-methylguanosine(37) in tRNA + S-adenosyl-L-homocysteine + H(+). Functionally, specifically methylates guanosine-37 in various tRNAs. The protein is tRNA (guanine-N(1)-)-methyltransferase of Stenotrophomonas maltophilia (strain K279a).